The chain runs to 599 residues: Elongation factor 4 (599 aa).

A tr-type G domain is found at 5 to 187 (SHIRNFSIIA…VLIKSVPAPV (183 aa)). GTP contacts are provided by residues 17 to 22 (DHGKST) and 134 to 137 (NKID).

It belongs to the TRAFAC class translation factor GTPase superfamily. Classic translation factor GTPase family. LepA subfamily.

It localises to the cell inner membrane. The catalysed reaction is GTP + H2O = GDP + phosphate + H(+). Required for accurate and efficient protein synthesis under certain stress conditions. May act as a fidelity factor of the translation reaction, by catalyzing a one-codon backward translocation of tRNAs on improperly translocated ribosomes. Back-translocation proceeds from a post-translocation (POST) complex to a pre-translocation (PRE) complex, thus giving elongation factor G a second chance to translocate the tRNAs correctly. Binds to ribosomes in a GTP-dependent manner. The chain is Elongation factor 4 from Saccharophagus degradans (strain 2-40 / ATCC 43961 / DSM 17024).